Consider the following 191-residue polypeptide: Zinc finger protein GIS2 (191 aa).

A C2H2-type zinc finger spans residues 55-77 (FKCHYCFRNFPTSQALGGHQNAH).

In terms of tissue distribution, expressed in inflorescence meristems, floral meristems and stem epidermis.

It localises to the nucleus. Probable transcription factor required for the initiation of inflorescence trichomes in response to gibberellin and cytokinin. Is not involved in the regulation of trichome branching. Is functionally equivalent to ZFP8. This chain is Zinc finger protein GIS2 (GIS2), found in Arabidopsis thaliana (Mouse-ear cress).